Reading from the N-terminus, the 657-residue chain is Penicillin-binding protein activator LpoA (657 aa).

The signal sequence occupies residues 1–25 (MLSSTFVRSKAGLVPVILAALILAA). Cysteine 26 is lipidated: N-palmitoyl cysteine. Cysteine 26 is lipidated: S-diacylglycerol cysteine.

This sequence belongs to the LpoA family. Interacts with PBP1a.

It is found in the cell outer membrane. Its function is as follows. Regulator of peptidoglycan synthesis that is essential for the function of penicillin-binding protein 1A (PBP1a). The chain is Penicillin-binding protein activator LpoA from Yersinia pseudotuberculosis serotype O:1b (strain IP 31758).